A 266-amino-acid polypeptide reads, in one-letter code: Eukaryotic translation initiation factor 3 subunit J (266 aa).

2 disordered regions span residues 1-111 (MAPS…EKDA) and 217-266 (NEKM…DDFM). Residues 26–44 (DEEEEDVLDSWDAAEDSEV) show a composition bias toward acidic residues. The stretch at 40-82 (EDSEVEREKAAKAAEAKAKAEAEAAANKKSKAQRIQEKKAQRK) forms a coiled coil. Basic and acidic residues-rich tracts occupy residues 45 to 61 (EREK…KAEA) and 73 to 85 (RIQE…KADA). The span at 86–97 (DAEDSDDSDEDE) shows a compositional bias: acidic residues. Composition is skewed to basic and acidic residues over residues 98-111 (AERR…EKDA) and 218-230 (EKMK…DKGN). The span at 254–266 (SYDDDGLDDDDFM) shows a compositional bias: acidic residues.

The protein belongs to the eIF-3 subunit J family. As to quaternary structure, component of the eukaryotic translation initiation factor 3 (eIF-3) complex.

It localises to the cytoplasm. Functionally, component of the eukaryotic translation initiation factor 3 (eIF-3) complex, which is involved in protein synthesis of a specialized repertoire of mRNAs and, together with other initiation factors, stimulates binding of mRNA and methionyl-tRNAi to the 40S ribosome. The eIF-3 complex specifically targets and initiates translation of a subset of mRNAs involved in cell proliferation. This is Eukaryotic translation initiation factor 3 subunit J (hcr1) from Aspergillus niger (strain ATCC MYA-4892 / CBS 513.88 / FGSC A1513).